We begin with the raw amino-acid sequence, 375 residues long: Acyl-coenzyme A diphosphatase NUDT19 (375 aa).

The 249-residue stretch at 15 to 263 folds into the Nudix hydrolase domain; it reads AASIVLAAGW…IWLPPPQFYE (249 aa). Residues 91 to 116 form a disordered region; sequence LGPAPFSRTAFPSLPDTDDHKTDNTG. The Nudix box motif lies at 116-137; sequence GTLPEDVAFRICAVREAFEEAG. The Mg(2+) site is built by E131 and E135. The Microbody targeting signal motif lies at 373–375; that stretch reads SHL.

Belongs to the Nudix hydrolase family. As to quaternary structure, monomer. It depends on Mg(2+) as a cofactor. The cofactor is Mn(2+).

The protein resides in the peroxisome. It catalyses the reaction an acyl-CoA + H2O = an acyl-4'-phosphopantetheine + adenosine 3',5'-bisphosphate + 2 H(+). It carries out the reaction CoA + H2O = (R)-4'-phosphopantetheine + adenosine 3',5'-bisphosphate + 2 H(+). The catalysed reaction is hexanoyl-CoA + H2O = hexanoyl-4'-phosphopantetheine + adenosine 3',5'-bisphosphate + 2 H(+). The enzyme catalyses octanoyl-CoA + H2O = S-octanoyl-4'-phosphopantetheine + adenosine 3',5'-bisphosphate + 2 H(+). It catalyses the reaction butanoyl-CoA + H2O = S-butanoyl-4'-phosphopantetheine + adenosine 3',5'-bisphosphate + 2 H(+). It carries out the reaction propanoyl-CoA + H2O = propanoyl-4'-phosphopantetheine + adenosine 3',5'-bisphosphate + 2 H(+). The catalysed reaction is malonyl-CoA + H2O = malonyl-4'-phosphopantetheine + adenosine 3',5'-bisphosphate + 2 H(+). The enzyme catalyses succinyl-CoA + H2O = succinyl-4'-phosphopantetheine + adenosine 3',5'-bisphosphate + 2 H(+). It catalyses the reaction choloyl-CoA + H2O = S-choloyl-4'-phosphopantetheine + adenosine 3',5'-bisphosphate + 2 H(+). It carries out the reaction 4,8-dimethylnonanoyl-CoA + H2O = S-(4,8-dimethylnonanoyl)-4'-phosphopantetheine + adenosine 3',5'-bisphosphate + 2 H(+). The catalysed reaction is (9Z,12Z,15Z)-octadecatrienoyl-CoA + H2O = S-(9Z,12Z,15Z-octadecatrienoyl)-4'-phosphopantetheine + adenosine 3',5'-bisphosphate + 2 H(+). The enzyme catalyses (9Z,12Z)-octadecadienoyl-CoA + H2O = S-(9Z,12Z-octadecadienoyl)-4'-phosphopantetheine + adenosine 3',5'-bisphosphate + 2 H(+). It catalyses the reaction (9Z)-hexadecenoyl-CoA + H2O = S-(9Z-hexadecenoyl)-4'-phosphopantetheine + adenosine 3',5'-bisphosphate + 2 H(+). It carries out the reaction (9Z)-tetradecenoyl-CoA + H2O = S-(9Z-tetradecenoyl)-4'-phosphopantetheine + adenosine 3',5'-bisphosphate + 2 H(+). The catalysed reaction is (6Z)-octenoyl-CoA + H2O = S-(6Z-octenoyl)-4'-phosphopantetheine + adenosine 3',5'-bisphosphate + 2 H(+). The enzyme catalyses hexadecanoyl-CoA + H2O = S-hexadecanoyl-4'-phosphopantetheine + adenosine 3',5'-bisphosphate + 2 H(+). It catalyses the reaction tetradecanoyl-CoA + H2O = tetradecanoyl-4'-phosphopantetheine + adenosine 3',5'-bisphosphate + 2 H(+). It carries out the reaction dodecanoyl-CoA + H2O = S-dodecanoyl-4'-phosphopantetheine + adenosine 3',5'-bisphosphate + 2 H(+). The catalysed reaction is a 5'-end CoA-ribonucleoside in mRNA + H2O = a 5'-end phospho-adenosine-phospho-ribonucleoside in mRNA + (R)-4'-phosphopantetheine + 2 H(+). Fatty acyl-coenzyme A (CoA) diphosphatase that hydrolyzes fatty acyl-CoA to yield acyl-4'-phosphopantetheine and adenosine 3',5'-bisphosphate. Mediates the hydrolysis of a wide range of CoA esters, including choloyl-CoA and branched-chain fatty-acyl-CoA esters and at low substrate concentrations medium and long-chain fatty-acyl-CoA esters are the primary substrates. Highest activity seen with medium-chain acyl-CoA esters and higher rates of activity seen with the unsaturated acyl-CoA esters compared with the saturated esters. Exhibits decapping activity towards dpCoA-capped RNAs in vitro. The polypeptide is Acyl-coenzyme A diphosphatase NUDT19 (NUDT19) (Homo sapiens (Human)).